The sequence spans 341 residues: Very-long-chain 3-oxoacyl-CoA reductase (341 aa).

A helical transmembrane segment spans residues 22-42 (AVTGFLLVGIASFAAPLISTI). L67, D123, D131, N150, Y217, K221, V250, and T252 together coordinate NADP(+). Catalysis depends on Y217, which acts as the Proton donor. The active-site Lowers pKa of active site Tyr is K221.

The protein belongs to the short-chain dehydrogenases/reductases (SDR) family.

The protein localises to the endoplasmic reticulum membrane. It catalyses the reaction a very-long-chain (3R)-3-hydroxyacyl-CoA + NADP(+) = a very-long-chain 3-oxoacyl-CoA + NADPH + H(+). The protein operates within lipid metabolism; fatty acid biosynthesis. Component of the microsomal membrane bound fatty acid elongation system, which produces the 26-carbon very long-chain fatty acids (VLCFA) from palmitate. Catalyzes the reduction of the 3-ketoacyl-CoA intermediate that is formed in each cycle of fatty acid elongation. VLCFAs serve as precursors for ceramide and sphingolipids. The chain is Very-long-chain 3-oxoacyl-CoA reductase from Pyrenophora tritici-repentis (strain Pt-1C-BFP) (Wheat tan spot fungus).